The sequence spans 178 residues: METQGVMKEIQYEEFEEKIIEIRRTSKVTKGGKNLSFRVVAIVGNKNGKVGLGIGKAREVPEAIRKAISAAKRNIVEVPVINGTIPHEVIGRQDASKVLLKPAAPGTGIIAGGTVRAVVELAGIQNILTKSLGSTNPLNLALATMNGLKNLLDPRKVAKLRDISVEEVFKGVRRENNA.

An S5 DRBM domain is found at 15–78; it reads FEEKIIEIRR…SAAKRNIVEV (64 aa).

Belongs to the universal ribosomal protein uS5 family. Part of the 30S ribosomal subunit. Contacts proteins S4 and S8.

In terms of biological role, with S4 and S12 plays an important role in translational accuracy. Its function is as follows. Located at the back of the 30S subunit body where it stabilizes the conformation of the head with respect to the body. The protein is Small ribosomal subunit protein uS5 of Thermotoga maritima (strain ATCC 43589 / DSM 3109 / JCM 10099 / NBRC 100826 / MSB8).